The chain runs to 367 residues: Chorismate synthase (367 aa).

R48 and R54 together coordinate NADP(+). FMN-binding positions include 125-127 (RSS), 238-239 (NA), G278, 293-297 (KPTSS), and R319.

Belongs to the chorismate synthase family. As to quaternary structure, homotetramer. FMNH2 serves as cofactor.

It carries out the reaction 5-O-(1-carboxyvinyl)-3-phosphoshikimate = chorismate + phosphate. Its pathway is metabolic intermediate biosynthesis; chorismate biosynthesis; chorismate from D-erythrose 4-phosphate and phosphoenolpyruvate: step 7/7. Catalyzes the anti-1,4-elimination of the C-3 phosphate and the C-6 proR hydrogen from 5-enolpyruvylshikimate-3-phosphate (EPSP) to yield chorismate, which is the branch point compound that serves as the starting substrate for the three terminal pathways of aromatic amino acid biosynthesis. This reaction introduces a second double bond into the aromatic ring system. This is Chorismate synthase from Stenotrophomonas maltophilia (strain K279a).